The following is a 367-amino-acid chain: Nociceptin receptor (367 aa).

Topologically, residues 1–45 (MESLFPAPFWEVLYGSHFQGNLSLLNETVPHHLLLNASHSAFLPL) are extracellular. N-linked (GlcNAc...) asparagine glycans are attached at residues Asn21, Asn26, and Asn36. The chain crosses the membrane as a helical span at residues 46 to 71 (GLKVTIVGLYLAVCIGGLLGNCLVMY). Over 72–84 (VILRHTKMKTATN) the chain is Cytoplasmic. The helical transmembrane segment at 85-106 (IYIFNLALADTLVLLTLPFQGT) threads the bilayer. Topologically, residues 107–121 (DILLGFWPFGNALCK) are extracellular. Cys120 and Cys197 are joined by a disulfide. Residues 122-143 (TVIAIDYYNMFTSTFTLTAMSV) traverse the membrane as a helical segment. Residues 144-162 (DRYVAICHPIRALDVRTSS) lie on the Cytoplasmic side of the membrane. Residues 163-185 (KAQAVNVAIWALASVVGVPVAIM) form a helical membrane-spanning segment. Residues 186 to 208 (GSAQVEDEEIECLVEIPAPQDYW) are Extracellular-facing. The helical transmembrane segment at 209–233 (GPVFAICIFLFSFIIPVLIISVCYS) threads the bilayer. The Cytoplasmic segment spans residues 234-261 (LMIRRLRGVRLLSGSREKDRNLRRITRL). The chain crosses the membrane as a helical span at residues 262–282 (VLVVVAVFVGCWTPVQVFVLV). Over 283-297 (QGLGVQPGSETAVAI) the chain is Extracellular. Residues 298–319 (LRFCTALGYVNSCLNPILYAFL) form a helical membrane-spanning segment. Residues 320–367 (DENFKACFRKFCCASALHREMQVSDRVRSIAKDVGLGCKTSETVPRPA) lie on the Cytoplasmic side of the membrane. Cys331 carries S-palmitoyl cysteine lipidation.

Belongs to the G-protein coupled receptor 1 family. Phosphorylation at Ser-360 requires GRK3. As to expression, in the brain, isoform KOR3 and isoform KOR3C are most abundant in hypothalamus and periaqueductal gray. Isoform KOR3A is highly expressed in cortex, striatum and brainstem. Isoform KOR3D is highly expressed in cerebellum, hypothalamus and brainstem. Detected in spleen lymphocytes.

Its subcellular location is the cell membrane. The protein localises to the cytoplasmic vesicle. In terms of biological role, G-protein coupled opioid receptor that functions as a receptor for the endogenous neuropeptide nociceptin. Ligand binding causes a conformation change that triggers signaling via guanine nucleotide-binding proteins (G proteins) and modulates the activity of down-stream effectors. Signaling via G proteins mediates inhibition of adenylate cyclase activity and calcium channel activity. Arrestins modulate signaling via G proteins and mediate the activation of alternative signaling pathways that lead to the activation of MAP kinases. Plays a role in modulating nociception and the perception of pain. Plays a role in the regulation of locomotor activity by the neuropeptide nociceptin. This is Nociceptin receptor (Oprl1) from Mus musculus (Mouse).